Reading from the N-terminus, the 274-residue chain is Penicillin-insensitive murein endopeptidase (274 aa).

A signal peptide spans 1 to 19 (MNKTAIALLALLASSASLA). 3 cysteine pairs are disulfide-bonded: Cys44-Cys265, Cys187-Cys235, and Cys216-Cys223. The Zn(2+) site is built by His110, His113, Asp120, Asp147, His150, and His211. The segment at 227 to 274 (PLPPPGDGCGAELQSWFEPPKPGTTKPEKKTPPPLPPSCQALLDEHVI) is disordered.

This sequence belongs to the peptidase M74 family. In terms of assembly, dimer. It depends on Zn(2+) as a cofactor.

It localises to the periplasm. Murein endopeptidase that cleaves the D-alanyl-meso-2,6-diamino-pimelyl amide bond that connects peptidoglycan strands. Likely plays a role in the removal of murein from the sacculus. This is Penicillin-insensitive murein endopeptidase from Escherichia coli O6:K15:H31 (strain 536 / UPEC).